The chain runs to 622 residues: Palmitoyltransferase ZDHHC13 (622 aa).

The residue at position 1 (methionine 1) is an N-acetylmethionine. Topologically, residues 1 to 291 (MEGPGLGSQC…RLWRWLQKCE (291 aa)) are cytoplasmic. ANK repeat units lie at residues 43 to 78 (PLIEDSSNCDIVKATQYGIFERCKELVEAGYDVRQP), 81 to 110 (ENVSLLHWAAINNRLDLVKFYISKGAVVDQ), 115 to 144 (LNSTPLHWAIRQGHLPMVILLLQHGADPTL), 148 to 177 (EGFSSIHLAVLFQHMPIIAYLISKGQSVNM), 181 to 211 (NGQTPLMLSAHKVIGPEPTGFLLKFNPSLNV), 216 to 245 (HQNTPLHWAVAAGNVNAVDKLLEAGSSLDI), and 249 to 277 (KGETPLDMALQNKNQLIIHMLKTEAKMRA). The helical transmembrane segment at 292-312 (LFLLLMLSVITMWAIGYILDF) threads the bilayer. Over 313–320 (NSDSWLLK) the chain is Lumenal. Residues 321–341 (GCLLVTLFFLTSLFPRFLVGY) form a helical membrane-spanning segment. The Cytoplasmic segment spans residues 342–347 (KNLVYL). A helical membrane pass occupies residues 348 to 368 (PTAFLLSSVFWIFMTWFILFF). At 369-370 (PD) the chain is on the lumenal side. The helical transmembrane segment at 371-391 (LAGAPFYFSFIFSIVAFLYFF) threads the bilayer. Topologically, residues 392–470 (YKTWATDPGF…RCIGFGNHHY (79 aa)) are cytoplasmic. The region spanning 426–476 (TFCTSCLIRKPLRSLHCHVCNCCVARYDQHCLWTGRCIGFGNHHYYIFFLF) is the DHHC domain. Catalysis depends on cysteine 456, which acts as the S-palmitoyl cysteine intermediate. The helical transmembrane segment at 471–491 (YIFFLFFLSMVCGWIIYGSFI) threads the bilayer. The Lumenal segment spans residues 492-518 (YLSSHCATTFKEDGLWTYLNQIVACSP). Residues 519 to 539 (WVLYILMLATFHFSWSTFLLL) traverse the membrane as a helical segment. The Cytoplasmic portion of the chain corresponds to 540-622 (NQLFQIAFLG…PAREKVLRSV (83 aa)).

The protein belongs to the DHHC palmitoyltransferase family. AKR/ZDHHC17 subfamily. Interacts (via ANK repeats) with CLIP3. Interacts (via ANK repeats) with DNAJC5 (via C-terminus). Interacts (via ANK repeats) with HTT. Interacts (via ANK repeats) with MAP6. Interacts (via ANK repeats) with SNAP23. Interacts (via ANK repeats) with SNAP25. May interact (via ANK repeats) with SPRED2.

It is found in the golgi apparatus membrane. The protein localises to the cytoplasmic vesicle membrane. The enzyme catalyses L-cysteinyl-[protein] + hexadecanoyl-CoA = S-hexadecanoyl-L-cysteinyl-[protein] + CoA. Its function is as follows. Palmitoyltransferase that could catalyze the addition of palmitate onto various protein substrates. Palmitoyltransferase for HTT and GAD2. May play a role in Mg(2+) transport. The sequence is that of Palmitoyltransferase ZDHHC13 from Homo sapiens (Human).